A 246-amino-acid chain; its full sequence is 33kDa venom protein (246 aa).

The signal sequence occupies residues 1–20; it reads MAGKEVIFIMALFIAVESSP. A run of 7 repeats spans residues 83–96, 97–110, 111–124, 125–138, 139–152, 153–166, and 167–180. Residues 83–243 form a 12 X approximate tandem repeats of [AV][DE]X[VL]SGSX[DE]QX[KR]X[ST] region; it reads GGAVSESVKQ…SGSVGNDDDI (161 aa). The tract at residues 88–246 is disordered; that stretch reads ESVKQKRETA…VGNDDDISVQ (159 aa). Positions 112-123 are enriched in polar residues; that stretch reads ENLSGSFDQQKS. The segment covering 175–186 has biased composition (basic and acidic residues); sequence DKQKVTVEEKSE. An 8; half-length repeat occupies 181-187; the sequence is VEEKSEP. A run of 4 repeats spans residues 188–201, 202–215, 216–229, and 230–243. A compositionally biased stretch (polar residues) spans 217 to 228; sequence ESLSGSFDQQKS.

In terms of tissue distribution, expressed by the venom gland.

The protein localises to the secreted. The chain is 33kDa venom protein from Chelonus sp. nr. curvimaculatus (Parasitic wasp).